The primary structure comprises 263 residues: tRNA pseudouridine synthase A (263 aa).

Residue Asp51 is the Nucleophile of the active site. Substrate is bound at residue Tyr109.

Belongs to the tRNA pseudouridine synthase TruA family. Homodimer.

The catalysed reaction is uridine(38/39/40) in tRNA = pseudouridine(38/39/40) in tRNA. Formation of pseudouridine at positions 38, 39 and 40 in the anticodon stem and loop of transfer RNAs. The sequence is that of tRNA pseudouridine synthase A from Mannheimia succiniciproducens (strain KCTC 0769BP / MBEL55E).